The following is a 146-amino-acid chain: Protein JTB (146 aa).

Residues 1 to 30 (MLAGAGRPGLPQGRHLCWLLCAFTLKLCQA) form the signal peptide. Over 31–105 (EAPVQEEKLS…CRSALMEQRL (75 aa)) the chain is Extracellular. A helical membrane pass occupies residues 106 to 126 (FWKFEGAVVCVALIFACLVII). Residues 127–146 (RQRQLDRKALEKVRKQIESI) lie on the Cytoplasmic side of the membrane.

This sequence belongs to the JTB family. As to quaternary structure, interacts with AURKA, AURKB, BIRC5 and INCENP. May be a component of the CPC at least composed of BIRC5/survivin, CDCA8/borealin, INCENP and AURKB/Aurora-B. Ubiquitous. Expressed in all normal human tissues studied but overexpressed or underexpressed in many of their malignant counterparts.

The protein resides in the membrane. The protein localises to the mitochondrion. It localises to the cytoplasm. Its subcellular location is the cytoskeleton. It is found in the microtubule organizing center. The protein resides in the centrosome. The protein localises to the spindle. Functionally, required for normal cytokinesis during mitosis. Plays a role in the regulation of cell proliferation. May be a component of the chromosomal passenger complex (CPC), a complex that acts as a key regulator of mitosis. The CPC complex has essential functions at the centromere in ensuring correct chromosome alignment and segregation and is required for chromatin-induced microtubule stabilization and spindle assembly. Increases AURKB activity. Inhibits apoptosis induced by TGFB1. Overexpression induces swelling of mitochondria and reduces mitochondrial membrane potential. The chain is Protein JTB (JTB) from Homo sapiens (Human).